The sequence spans 336 residues: Dihydroorotate dehydrogenase (quinone) (336 aa).

Residues 62 to 66 (AGLDK) and threonine 86 each bind FMN. Lysine 66 lines the substrate pocket. 111–115 (NRMGF) contacts substrate. FMN contacts are provided by asparagine 139 and asparagine 172. Asparagine 172 lines the substrate pocket. Residue serine 175 is the Nucleophile of the active site. Substrate is bound at residue asparagine 177. FMN contacts are provided by lysine 217 and threonine 245. 246-247 (NT) contributes to the substrate binding site. FMN contacts are provided by residues glycine 268, glycine 297, and 318-319 (YS).

This sequence belongs to the dihydroorotate dehydrogenase family. Type 2 subfamily. In terms of assembly, monomer. FMN serves as cofactor.

It localises to the cell membrane. The catalysed reaction is (S)-dihydroorotate + a quinone = orotate + a quinol. It functions in the pathway pyrimidine metabolism; UMP biosynthesis via de novo pathway; orotate from (S)-dihydroorotate (quinone route): step 1/1. Functionally, catalyzes the conversion of dihydroorotate to orotate with quinone as electron acceptor. The chain is Dihydroorotate dehydrogenase (quinone) from Shigella flexneri serotype 5b (strain 8401).